We begin with the raw amino-acid sequence, 430 residues long: UDP-N-acetylglucosamine 1-carboxyvinyltransferase (430 aa).

22–23 serves as a coordination point for phosphoenolpyruvate; the sequence is KN. R102 serves as a coordination point for UDP-N-acetyl-alpha-D-glucosamine. The active-site Proton donor is the C126. C126 bears the 2-(S-cysteinyl)pyruvic acid O-phosphothioketal mark. UDP-N-acetyl-alpha-D-glucosamine contacts are provided by residues 131–135, 172–175, D317, and I339; these read RPVDL and KVSV.

This sequence belongs to the EPSP synthase family. MurA subfamily.

It localises to the cytoplasm. It catalyses the reaction phosphoenolpyruvate + UDP-N-acetyl-alpha-D-glucosamine = UDP-N-acetyl-3-O-(1-carboxyvinyl)-alpha-D-glucosamine + phosphate. Its pathway is cell wall biogenesis; peptidoglycan biosynthesis. In terms of biological role, cell wall formation. Adds enolpyruvyl to UDP-N-acetylglucosamine. The chain is UDP-N-acetylglucosamine 1-carboxyvinyltransferase from Sinorhizobium medicae (strain WSM419) (Ensifer medicae).